Reading from the N-terminus, the 465-residue chain is Macrophage metalloelastase (465 aa).

A signal peptide spans 1-21; the sequence is MKFLLVLVLLVSLQVSACGAA. The propeptide at 22–101 is activation peptide; it reads PMNESEFAEW…DVQHLRAVPQ (80 aa). The short motif at 86–93 is the Cysteine switch element; that stretch reads SRCGVPDV. Residue Cys88 coordinates Zn(2+). Ca(2+) contacts are provided by Asp120 and Asp154. 2 residues coordinate Zn(2+): His164 and Asp166. The Ca(2+) site is built by Asp171, Gly172, Gly174, and Thr176. His179 contributes to the Zn(2+) binding site. Ca(2+) is bound by residues Gly186 and Asp190. His192 serves as a coordination point for Zn(2+). Ca(2+) contacts are provided by Asp194, Glu195, and Glu197. His214 contacts Zn(2+). Residue Glu215 is part of the active site. Zn(2+) is bound by residues His218 and His224. A disulfide bond links Cys278 and Cys465. Hemopexin repeat units lie at residues 281–324, 325–371, 373–421, and 422–465; these read SLSF…WPTI, PSGI…GFPA, VKKI…FPGI, and RPKI…WFGC. Asp285 lines the Ca(2+) pocket. Asn313 carries N-linked (GlcNAc...) asparagine glycosylation. Ca(2+) is bound by residues Asp377 and Asp426.

The protein belongs to the peptidase M10A family. Ca(2+) serves as cofactor. The cofactor is Zn(2+).

Its subcellular location is the secreted. The protein resides in the extracellular space. It localises to the extracellular matrix. It catalyses the reaction Hydrolysis of soluble and insoluble elastin. Specific cleavages are also produced at 14-Ala-|-Leu-15 and 16-Tyr-|-Leu-17 in the B chain of insulin.. May be involved in tissue injury and remodeling. Has significant elastolytic activity. Can accept large and small amino acids at the P1' site, but has a preference for leucine. Aromatic or hydrophobic residues are preferred at the P1 site, with small hydrophobic residues (preferably alanine) occupying P3. The chain is Macrophage metalloelastase (Mmp12) from Rattus norvegicus (Rat).